The sequence spans 729 residues: Glycine--tRNA ligase, mitochondrial 1 (729 aa).

At Met1 the chain carries N-acetylmethionine. A mitochondrion-targeting transit peptide spans 1–28 (MRIFSTFVFHRRQQIFNLRQFQTTTILR). The WHEP-TRS domain maps to 50 to 106 (SLSEKSSSVEAQGNAVRALKASRAAKPEIDAAIEQLNKLKLEKSTVEKELQSIISSS). Glycine is bound at residue Glu296. ATP is bound by residues 328 to 330 (RNE) and 339 to 340 (RV). Glu347 provides a ligand contact to glycine. An ATP-binding site is contributed by 454–455 (EC). 575 to 577 (EPS) is a glycine binding site. Arg582 contacts ATP.

This sequence belongs to the class-II aminoacyl-tRNA synthetase family. In terms of assembly, homodimer.

The protein localises to the mitochondrion. It localises to the cytoplasm. Its subcellular location is the cytosol. It catalyses the reaction tRNA(Gly) + glycine + ATP = glycyl-tRNA(Gly) + AMP + diphosphate. The catalysed reaction is 2 ATP + H(+) = P(1),P(4)-bis(5'-adenosyl) tetraphosphate + diphosphate. Its function is as follows. Catalyzes the ATP-dependent ligation of glycine to the 3'-end of its cognate tRNA, via the formation of an aminoacyl-adenylate intermediate (Gly-AMP). Also produces diadenosine tetraphosphate (Ap4A), a universal pleiotropic signaling molecule needed for cell regulation pathways, by direct condensation of 2 ATPs. Thereby, may play a special role in Ap4A homeostasis. This chain is Glycine--tRNA ligase, mitochondrial 1, found in Arabidopsis thaliana (Mouse-ear cress).